The sequence spans 398 residues: Cathepsin D (398 aa).

An N-terminal signal peptide occupies residues 1–20; that stretch reads MAPRGLLVLLLLALVGPCAA. The propeptide at 21–63 is activation peptide; sequence LIRIPLTKFTSTRRMLTEVGSEIPDMNAITQFLKFKLGFADLA. A Peptidase A1 domain is found at 78-395; that stretch reads YYGEIGIGTP…DRDNDSVGFA (318 aa). The active site involves Asp96. Cys109 and Cys116 are disulfide-bonded. N-linked (GlcNAc...) asparagine glycans are attached at residues Asn133 and Asn251. The cysteines at positions 274 and 278 are disulfide-linked. Asp283 is an active-site residue. Cys317 and Cys354 form a disulfide bridge.

The protein belongs to the peptidase A1 family. As to quaternary structure, consists of a light chain and a heavy chain. Oocytic yolk, preovulatory follicles, liver.

It is found in the lysosome. It carries out the reaction Specificity similar to, but narrower than, that of pepsin A. Does not cleave the 4-Gln-|-His-5 bond in B chain of insulin.. Functionally, acid protease active in intracellular protein breakdown. In chicken it is a key enzyme for yolk formation as it is capable of catalyzing intra oocytic break down of protein components of both vitellogenin and VLDL. This Gallus gallus (Chicken) protein is Cathepsin D (CTSD).